Reading from the N-terminus, the 154-residue chain is MAEAAQAPQQQFAIQRIYLKDVSFEAPSSPVMFQKEWNPDVKLDLDTQSRELGQGVYEVVLRLTVTVKNAEETAFLCEVQQAGIFSAEQMEAGQLAHCLGAFCPNILFPYARETISSLVVKGTFPQLNLAPVNFDALFMNYLQQQAQEGATANA.

Belongs to the SecB family. In terms of assembly, homotetramer, a dimer of dimers. One homotetramer interacts with 1 SecA dimer.

The protein resides in the cytoplasm. In terms of biological role, one of the proteins required for the normal export of preproteins out of the cell cytoplasm. It is a molecular chaperone that binds to a subset of precursor proteins, maintaining them in a translocation-competent state. It also specifically binds to its receptor SecA. This is Protein-export protein SecB from Vibrio cholerae serotype O1 (strain ATCC 39541 / Classical Ogawa 395 / O395).